The sequence spans 255 residues: Acetylglutamate kinase (255 aa).

Substrate is bound by residues 40–41 (GG), Arg62, and Asn153.

This sequence belongs to the acetylglutamate kinase family. ArgB subfamily.

It is found in the cytoplasm. It catalyses the reaction N-acetyl-L-glutamate + ATP = N-acetyl-L-glutamyl 5-phosphate + ADP. It functions in the pathway amino-acid biosynthesis; L-arginine biosynthesis; N(2)-acetyl-L-ornithine from L-glutamate: step 2/4. Catalyzes the ATP-dependent phosphorylation of N-acetyl-L-glutamate. This chain is Acetylglutamate kinase, found in Bacillus cereus (strain ATCC 10987 / NRS 248).